A 151-amino-acid chain; its full sequence is Large ribosomal subunit protein bL9 (151 aa).

This sequence belongs to the bacterial ribosomal protein bL9 family.

Binds to the 23S rRNA. This chain is Large ribosomal subunit protein bL9, found in Chlorobium chlorochromatii (strain CaD3).